Here is a 296-residue protein sequence, read N- to C-terminus: 4-hydroxy-tetrahydrodipicolinate synthase (296 aa).

Residue Thr-49 participates in pyruvate binding. Catalysis depends on Tyr-137, which acts as the Proton donor/acceptor. The Schiff-base intermediate with substrate role is filled by Lys-165. Pyruvate is bound at residue Ile-208.

Belongs to the DapA family. Homotetramer; dimer of dimers.

Its subcellular location is the cytoplasm. The enzyme catalyses L-aspartate 4-semialdehyde + pyruvate = (2S,4S)-4-hydroxy-2,3,4,5-tetrahydrodipicolinate + H2O + H(+). Its pathway is amino-acid biosynthesis; L-lysine biosynthesis via DAP pathway; (S)-tetrahydrodipicolinate from L-aspartate: step 3/4. Catalyzes the condensation of (S)-aspartate-beta-semialdehyde [(S)-ASA] and pyruvate to 4-hydroxy-tetrahydrodipicolinate (HTPA). This is 4-hydroxy-tetrahydrodipicolinate synthase from Ehrlichia canis (strain Jake).